Here is a 284-residue protein sequence, read N- to C-terminus: Elongation factor Ts (284 aa).

Positions 80 to 83 are involved in Mg(2+) ion dislocation from EF-Tu; it reads TDFV.

The protein belongs to the EF-Ts family.

The protein resides in the cytoplasm. Functionally, associates with the EF-Tu.GDP complex and induces the exchange of GDP to GTP. It remains bound to the aminoacyl-tRNA.EF-Tu.GTP complex up to the GTP hydrolysis stage on the ribosome. The chain is Elongation factor Ts from Photobacterium profundum (strain SS9).